The primary structure comprises 357 residues: Chorismate synthase (357 aa).

R46 is an NADP(+) binding site. Residues 123–125 (RSS), 235–236 (NA), G275, 290–294 (KPTPS), and R316 each bind FMN.

This sequence belongs to the chorismate synthase family. Homotetramer. FMNH2 serves as cofactor.

The enzyme catalyses 5-O-(1-carboxyvinyl)-3-phosphoshikimate = chorismate + phosphate. It participates in metabolic intermediate biosynthesis; chorismate biosynthesis; chorismate from D-erythrose 4-phosphate and phosphoenolpyruvate: step 7/7. Functionally, catalyzes the anti-1,4-elimination of the C-3 phosphate and the C-6 proR hydrogen from 5-enolpyruvylshikimate-3-phosphate (EPSP) to yield chorismate, which is the branch point compound that serves as the starting substrate for the three terminal pathways of aromatic amino acid biosynthesis. This reaction introduces a second double bond into the aromatic ring system. The polypeptide is Chorismate synthase (Nitratiruptor sp. (strain SB155-2)).